We begin with the raw amino-acid sequence, 409 residues long: Probable glutaryl-CoA dehydrogenase, mitochondrial (409 aa).

110–111 contributes to the substrate binding site; the sequence is RS. Residues 149–152, Ser158, and 184–186 contribute to the FAD site; these read FGLT and WIS. Ser158 provides a ligand contact to substrate. Residues 261–265 and Arg268 each bind substrate; that span reads FGCLN. The active-site Proton acceptor is Glu388. Thr390 and Phe408 together coordinate FAD.

Belongs to the acyl-CoA dehydrogenase family. It depends on FAD as a cofactor.

It is found in the mitochondrion matrix. The catalysed reaction is glutaryl-CoA + oxidized [electron-transfer flavoprotein] + 2 H(+) = (2E)-butenoyl-CoA + reduced [electron-transfer flavoprotein] + CO2. Its pathway is amino-acid metabolism; lysine degradation. It participates in amino-acid metabolism; tryptophan metabolism. In Caenorhabditis elegans, this protein is Probable glutaryl-CoA dehydrogenase, mitochondrial.